We begin with the raw amino-acid sequence, 514 residues long: 2,3-bisphosphoglycerate-independent phosphoglycerate mutase (514 aa).

Mn(2+)-binding residues include Asp-14 and Ser-64. Ser-64 (phosphoserine intermediate) is an active-site residue. Residues His-125, 155–156, Arg-187, Arg-193, 263–266, and Lys-337 contribute to the substrate site; these read RD and RADR. Mn(2+) is bound by residues Asp-404, His-408, Asp-445, His-446, and His-463.

It belongs to the BPG-independent phosphoglycerate mutase family. In terms of assembly, monomer. Mn(2+) is required as a cofactor.

It catalyses the reaction (2R)-2-phosphoglycerate = (2R)-3-phosphoglycerate. The protein operates within carbohydrate degradation; glycolysis; pyruvate from D-glyceraldehyde 3-phosphate: step 3/5. In terms of biological role, catalyzes the interconversion of 2-phosphoglycerate and 3-phosphoglycerate. This is 2,3-bisphosphoglycerate-independent phosphoglycerate mutase from Hahella chejuensis (strain KCTC 2396).